The sequence spans 763 residues: Phosphoglycerol transferase I (763 aa).

Helical transmembrane passes span 1-21 (MSEL…AWKA), 26-46 (WWFA…ITLY), 77-97 (ILPG…LGWV), and 108-128 (VGYS…SPAF).

The protein belongs to the OpgB family.

Its subcellular location is the cell inner membrane. The catalysed reaction is a phosphatidylglycerol + a membrane-derived-oligosaccharide D-glucose = a 1,2-diacyl-sn-glycerol + a membrane-derived-oligosaccharide 6-(glycerophospho)-D-glucose.. It functions in the pathway glycan metabolism; osmoregulated periplasmic glucan (OPG) biosynthesis. Functionally, transfers a phosphoglycerol residue from phosphatidylglycerol to the membrane-bound nascent glucan backbones. The polypeptide is Phosphoglycerol transferase I (Salmonella dublin (strain CT_02021853)).